Here is a 205-residue protein sequence, read N- to C-terminus: Guanylyl cyclase-activating protein 1 (205 aa).

Gly-2 carries N-myristoyl glycine lipidation. The residue at position 3 (Asn-3) is a Deamidated asparagine. 4 consecutive EF-hand domains span residues 14–49 (SSTE…KNLS), 51–86 (WASQ…VLKG), 87–122 (KVEQ…IRAI), and 131–166 (TAEE…DQML). 15 residues coordinate Ca(2+): Asp-64, Asn-66, Asp-68, Tyr-70, Glu-75, Asp-100, Asp-102, Asn-104, Cys-106, Glu-111, Asp-144, Asn-146, Asp-148, Glu-150, and Glu-155. The disordered stretch occupies residues 185 to 205 (NGEQDEEGASGRETEAAEADG).

As to quaternary structure, homodimer. Detected in the retina. Detected in rod and cone photoreceptor cells (at protein level). Also present in certain pinealocytes.

Its subcellular location is the membrane. The protein resides in the photoreceptor inner segment. It localises to the cell projection. It is found in the cilium. The protein localises to the photoreceptor outer segment. In terms of biological role, stimulates retinal guanylyl cyclase when free calcium ions concentration is low and inhibits guanylyl cyclase when free calcium ions concentration is elevated. This Ca(2+)-sensitive regulation of retinal guanylyl cyclase is a key event in recovery of the dark state of rod photoreceptors following light exposure. May be involved in cone photoreceptor light response and recovery of response in bright light. The sequence is that of Guanylyl cyclase-activating protein 1 (GUCA1A) from Bos taurus (Bovine).